We begin with the raw amino-acid sequence, 213 residues long: Translation initiation factor IF-3 (213 aa).

The tract at residues 193 to 213 (EKIASLPPLPPDNSGEPEDDE) is disordered.

The protein belongs to the IF-3 family. In terms of assembly, monomer.

It is found in the cytoplasm. In terms of biological role, IF-3 binds to the 30S ribosomal subunit and shifts the equilibrium between 70S ribosomes and their 50S and 30S subunits in favor of the free subunits, thus enhancing the availability of 30S subunits on which protein synthesis initiation begins. This is Translation initiation factor IF-3 from Chlorobaculum tepidum (strain ATCC 49652 / DSM 12025 / NBRC 103806 / TLS) (Chlorobium tepidum).